The sequence spans 476 residues: Light-independent protochlorophyllide reductase subunit N (476 aa).

Residues Cys31, Cys56, and Cys116 each contribute to the [4Fe-4S] cluster site.

Belongs to the BchN/ChlN family. As to quaternary structure, protochlorophyllide reductase is composed of three subunits; ChlL, ChlN and ChlB. Forms a heterotetramer of two ChlB and two ChlN subunits. It depends on [4Fe-4S] cluster as a cofactor.

Its subcellular location is the plastid. The protein localises to the chloroplast. It carries out the reaction chlorophyllide a + oxidized 2[4Fe-4S]-[ferredoxin] + 2 ADP + 2 phosphate = protochlorophyllide a + reduced 2[4Fe-4S]-[ferredoxin] + 2 ATP + 2 H2O. It functions in the pathway porphyrin-containing compound metabolism; chlorophyll biosynthesis (light-independent). Functionally, component of the dark-operative protochlorophyllide reductase (DPOR) that uses Mg-ATP and reduced ferredoxin to reduce ring D of protochlorophyllide (Pchlide) to form chlorophyllide a (Chlide). This reaction is light-independent. The NB-protein (ChlN-ChlB) is the catalytic component of the complex. The polypeptide is Light-independent protochlorophyllide reductase subunit N (Staurastrum punctulatum (Green alga)).